Here is a 344-residue protein sequence, read N- to C-terminus: MESSGSAACCPVLQQRARWERKRVCTARELLETERRYQEQLGLVATYFLRILKAKGTLRPPELQTLFGTWELIYAASLELLPYLEEGQWGLGLQGFCPHLELYAQFAANAERSQTTLQAQLKKNKRFRRFVKLQEGRPEFRGLQLQDLLPLPLQRLQQYENLVVALAENTVPNSPDYQQLTRAARLVSETAQKVHAIGQSQKNDQHLLRVQALLSGRKAKGLTSGRWFLRQGWLLVVPPTGEPRPRMFFLFSDVLLMAKPRPPLHLLKSGTFVCRALYPMSQCHLSRVFGHSGGPCGGLLSLSFPHEKLLLMSTDQEELSQWHHSLTLAIRSQKSSTHRSVTAT.

Residues 22-197 enclose the DH domain; sequence KRVCTARELL…SETAQKVHAI (176 aa). The 105-residue stretch at 227–331 folds into the PH domain; sequence WFLRQGWLLV…WHHSLTLAIR (105 aa).

It localises to the cell membrane. Functionally, promotes cell proliferation. This Mus musculus (Mouse) protein is Rho guanine nucleotide exchange factor 39 (Arhgef39).